A 312-amino-acid polypeptide reads, in one-letter code: Glyoxylate/hydroxypyruvate reductase A (312 aa).

Residue Arg227 is part of the active site. Residue His275 is the Proton donor of the active site.

It belongs to the D-isomer specific 2-hydroxyacid dehydrogenase family. GhrA subfamily.

It localises to the cytoplasm. The enzyme catalyses glycolate + NADP(+) = glyoxylate + NADPH + H(+). The catalysed reaction is (R)-glycerate + NAD(+) = 3-hydroxypyruvate + NADH + H(+). It carries out the reaction (R)-glycerate + NADP(+) = 3-hydroxypyruvate + NADPH + H(+). Its function is as follows. Catalyzes the NADPH-dependent reduction of glyoxylate and hydroxypyruvate into glycolate and glycerate, respectively. In Klebsiella pneumoniae (strain 342), this protein is Glyoxylate/hydroxypyruvate reductase A.